Reading from the N-terminus, the 227-residue chain is Isopentenyl-diphosphate Delta-isomerase 1 (227 aa).

Residue Lys-36 coordinates substrate. Mg(2+)-binding residues include His-40 and His-51. In terms of domain architecture, Nudix hydrolase spans 49–199 (LLHRAFSVFL…EVKLTPWFKI (151 aa)). Substrate is bound by residues Arg-70 and Lys-74. Cys-86 is a catalytic residue. Ser-87 is a substrate binding site. The Mg(2+) site is built by Glu-146 and Glu-148. Glu-148 is an active-site residue. Lys-176 carries the N6-acetyllysine modification. Residues 225–227 (HRM) carry the Microbody targeting signal motif.

The protein belongs to the IPP isomerase type 1 family. As to quaternary structure, monomer. Mg(2+) serves as cofactor.

Its subcellular location is the peroxisome. The enzyme catalyses isopentenyl diphosphate = dimethylallyl diphosphate. It functions in the pathway isoprenoid biosynthesis; dimethylallyl diphosphate biosynthesis; dimethylallyl diphosphate from isopentenyl diphosphate: step 1/1. Its function is as follows. Catalyzes the 1,3-allylic rearrangement of the homoallylic substrate isopentenyl (IPP) to its highly electrophilic allylic isomer, dimethylallyl diphosphate (DMAPP). The chain is Isopentenyl-diphosphate Delta-isomerase 1 (IDI1) from Mesocricetus auratus (Golden hamster).